Here is a 161-residue protein sequence, read N- to C-terminus: Phosphopantetheine adenylyltransferase (161 aa).

Ser9 is a binding site for substrate. ATP contacts are provided by residues 9–10 (SF) and His17. Substrate is bound by residues Lys41, Leu73, and Lys87. ATP-binding positions include 88–90 (GLR), Glu98, and 122–128 (YSFVSSS).

Belongs to the bacterial CoaD family. As to quaternary structure, homohexamer. Mg(2+) serves as cofactor.

The protein resides in the cytoplasm. It carries out the reaction (R)-4'-phosphopantetheine + ATP + H(+) = 3'-dephospho-CoA + diphosphate. It participates in cofactor biosynthesis; coenzyme A biosynthesis; CoA from (R)-pantothenate: step 4/5. In terms of biological role, reversibly transfers an adenylyl group from ATP to 4'-phosphopantetheine, yielding dephospho-CoA (dPCoA) and pyrophosphate. The sequence is that of Phosphopantetheine adenylyltransferase from Mycobacteroides abscessus (strain ATCC 19977 / DSM 44196 / CCUG 20993 / CIP 104536 / JCM 13569 / NCTC 13031 / TMC 1543 / L948) (Mycobacterium abscessus).